A 240-amino-acid chain; its full sequence is Methylthioribulose-1-phosphate dehydratase (240 aa).

The span at 1–10 (MAQEIEKTNN) shows a compositional bias: basic and acidic residues. The disordered stretch occupies residues 1-20 (MAQEIEKTNNDHLVQSSDPE). C100 is a binding site for substrate. Zn(2+)-binding residues include H117 and H119. E146 serves as the catalytic Proton donor/acceptor. H202 lines the Zn(2+) pocket.

This sequence belongs to the aldolase class II family. MtnB subfamily. The cofactor is Zn(2+).

It localises to the cytoplasm. It catalyses the reaction 5-(methylsulfanyl)-D-ribulose 1-phosphate = 5-methylsulfanyl-2,3-dioxopentyl phosphate + H2O. Its pathway is amino-acid biosynthesis; L-methionine biosynthesis via salvage pathway; L-methionine from S-methyl-5-thio-alpha-D-ribose 1-phosphate: step 2/6. Its function is as follows. Catalyzes the dehydration of methylthioribulose-1-phosphate (MTRu-1-P) into 2,3-diketo-5-methylthiopentyl-1-phosphate (DK-MTP-1-P). This chain is Methylthioribulose-1-phosphate dehydratase, found in Aspergillus fumigatus (strain CBS 144.89 / FGSC A1163 / CEA10) (Neosartorya fumigata).